Reading from the N-terminus, the 147-residue chain is Large ribosomal subunit protein uL11 (147 aa).

Belongs to the universal ribosomal protein uL11 family. In terms of assembly, part of the ribosomal stalk of the 50S ribosomal subunit. Interacts with L10 and the large rRNA to form the base of the stalk. L10 forms an elongated spine to which L12 dimers bind in a sequential fashion forming a multimeric L10(L12)X complex. One or more lysine residues are methylated.

Its function is as follows. Forms part of the ribosomal stalk which helps the ribosome interact with GTP-bound translation factors. The protein is Large ribosomal subunit protein uL11 of Parabacteroides distasonis (strain ATCC 8503 / DSM 20701 / CIP 104284 / JCM 5825 / NCTC 11152).